Reading from the N-terminus, the 297-residue chain is ATP phosphoribosyltransferase (297 aa).

Belongs to the ATP phosphoribosyltransferase family.

The protein resides in the cytoplasm. The catalysed reaction is 1-(5-phospho-beta-D-ribosyl)-ATP + diphosphate = 5-phospho-alpha-D-ribose 1-diphosphate + ATP. It functions in the pathway amino-acid biosynthesis; L-histidine biosynthesis; L-histidine from 5-phospho-alpha-D-ribose 1-diphosphate: step 1/9. Functionally, catalyzes the condensation of ATP and 5-phosphoribose 1-diphosphate to form N'-(5'-phosphoribosyl)-ATP (PR-ATP). Has a crucial role in the pathway because the rate of histidine biosynthesis seems to be controlled primarily by regulation of the enzymatic activity. This chain is ATP phosphoribosyltransferase (HIS1), found in Kluyveromyces lactis (strain ATCC 8585 / CBS 2359 / DSM 70799 / NBRC 1267 / NRRL Y-1140 / WM37) (Yeast).